Here is a 466-residue protein sequence, read N- to C-terminus: Na(+)/H(+) antiporter NhaA (466 aa).

Transmembrane regions (helical) follow at residues 32–52, 74–94, 111–131, 142–162, 172–192, 195–215, 221–241, 280–300, 310–330, 348–368, and 379–399; these read VGGVLLLLAAITALIWANVPA, LSVQHWAADGLLAVFFFVAGI, AALPVAAALCGMAVPALVYTL, GWAVPTATDIAFALAVLAVIG, FLLTLAVVDDLFAILIIAVFF, DLNFAALAGAVIGLAVFWLLL, GWYVYVPLALVIWGLMYNSGI, GLAVPLFALFSAGVVISGGAL, LGVVLGLVVGKAIGIFGGTWL, VFAVASLAGIGFTVSLLIGEL, and EVKAAVLTGSLLAALIATTLL.

It belongs to the NhaA Na(+)/H(+) (TC 2.A.33) antiporter family.

It localises to the cell membrane. The enzyme catalyses Na(+)(in) + 2 H(+)(out) = Na(+)(out) + 2 H(+)(in). Functionally, na(+)/H(+) antiporter that extrudes sodium in exchange for external protons. The sequence is that of Na(+)/H(+) antiporter NhaA from Streptomyces avermitilis (strain ATCC 31267 / DSM 46492 / JCM 5070 / NBRC 14893 / NCIMB 12804 / NRRL 8165 / MA-4680).